A 139-amino-acid chain; its full sequence is Ribonuclease P protein component (139 aa).

Residues 120-139 are disordered; it reads KPTTGVEYSPKNEKCESVLP. Over residues 129–139 the composition is skewed to basic and acidic residues; sequence PKNEKCESVLP.

Belongs to the RnpA family. As to quaternary structure, consists of a catalytic RNA component (M1 or rnpB) and a protein subunit.

It catalyses the reaction Endonucleolytic cleavage of RNA, removing 5'-extranucleotides from tRNA precursor.. Its function is as follows. RNaseP catalyzes the removal of the 5'-leader sequence from pre-tRNA to produce the mature 5'-terminus. It can also cleave other RNA substrates such as 4.5S RNA. The protein component plays an auxiliary but essential role in vivo by binding to the 5'-leader sequence and broadening the substrate specificity of the ribozyme. This chain is Ribonuclease P protein component, found in Chlamydia caviae (strain ATCC VR-813 / DSM 19441 / 03DC25 / GPIC) (Chlamydophila caviae).